A 144-amino-acid polypeptide reads, in one-letter code: MEKFLDINEIKKIIPHRYPFLLVDKITELEEGKSAVGYKNVTANEYFFNGHFPEEPVMPGVLIIEALAQVGAVAILSKEEFKGKIAYFGGINKAKFRKKVVPGDVLRLSIELTKIKGVAGVGKAVATVDGKVAAEAELLFVIGK.

Residue His-51 is part of the active site.

The protein belongs to the thioester dehydratase family. FabZ subfamily.

The protein resides in the cytoplasm. It catalyses the reaction a (3R)-hydroxyacyl-[ACP] = a (2E)-enoyl-[ACP] + H2O. Involved in unsaturated fatty acids biosynthesis. Catalyzes the dehydration of short chain beta-hydroxyacyl-ACPs and long chain saturated and unsaturated beta-hydroxyacyl-ACPs. This chain is 3-hydroxyacyl-[acyl-carrier-protein] dehydratase FabZ, found in Clostridium botulinum (strain 657 / Type Ba4).